The following is a 397-amino-acid chain: Tryptophan synthase beta chain (397 aa).

Position 87 is an N6-(pyridoxal phosphate)lysine (lysine 87).

It belongs to the TrpB family. As to quaternary structure, tetramer of two alpha and two beta chains. Pyridoxal 5'-phosphate is required as a cofactor.

It catalyses the reaction (1S,2R)-1-C-(indol-3-yl)glycerol 3-phosphate + L-serine = D-glyceraldehyde 3-phosphate + L-tryptophan + H2O. The protein operates within amino-acid biosynthesis; L-tryptophan biosynthesis; L-tryptophan from chorismate: step 5/5. The beta subunit is responsible for the synthesis of L-tryptophan from indole and L-serine. This is Tryptophan synthase beta chain from Escherichia coli O17:K52:H18 (strain UMN026 / ExPEC).